The sequence spans 363 residues: 3,4-dihydroxy-2-butanone 4-phosphate synthase (363 aa).

The tract at residues 1-202 (MSHISPIPEI…ITDLIEYRSR (202 aa)) is DHBP synthase. Residues 28-29 (RE), D33, 141-145 (RAGHT), and E165 contribute to the D-ribulose 5-phosphate site. E29 contacts Mg(2+). H144 contributes to the Mg(2+) binding site. Positions 205 to 363 (SLLEDMGNAP…EVVGFEEAEK (159 aa)) are GTP cyclohydrolase II-like.

The protein in the N-terminal section; belongs to the DHBP synthase family. It in the C-terminal section; belongs to the GTP cyclohydrolase II family. Mg(2+) serves as cofactor. Mn(2+) is required as a cofactor.

The enzyme catalyses D-ribulose 5-phosphate = (2S)-2-hydroxy-3-oxobutyl phosphate + formate + H(+). It participates in cofactor biosynthesis; riboflavin biosynthesis; 2-hydroxy-3-oxobutyl phosphate from D-ribulose 5-phosphate: step 1/1. In terms of biological role, catalyzes the conversion of D-ribulose 5-phosphate to formate and 3,4-dihydroxy-2-butanone 4-phosphate. This Neisseria meningitidis serogroup A / serotype 4A (strain DSM 15465 / Z2491) protein is 3,4-dihydroxy-2-butanone 4-phosphate synthase (ribB).